The following is a 1070-amino-acid chain: Potassium/chloride cotransporter 3 (1070 aa).

The next 15 helical transmembrane spans lie at 92 to 112 (GVML…TMFI), 114 to 134 (LFWV…AICC), 142 to 162 (ISLS…YFII), 174 to 194 (VGIL…VGGV), 196 to 216 (VILM…LHDT), 228 to 248 (LYGT…VKFV), 251 to 271 (LAPV…GGGI), 400 to 420 (FFML…GTNM), 433 to 453 (VGTI…AILF), 473 to 493 (TMVV…GAFL), 534 to 554 (PFLG…LGAV), 557 to 577 (IAEV…LIAV), 600 to 620 (LLGA…LACI), 791 to 811 (LVLF…LIVT), and 827 to 847 (FIDI…AYLL).

In terms of tissue distribution, expressed in the amphid sheath glia and the cephalic sheath glia. Also expressed in the inner labial and outer labial sheath and socket glia and as well as phasmid sheath glia.

The protein resides in the cell membrane. Its function is as follows. Probable potassium/chloride cotransporter that functions in the amphid sheath glial cells to regulate thermotaxis behavior. By maintaining chloride homeostasis, negatively regulates guanylate cyclase gcy-8 in the thermosensory AFD neurons and thereby controls the microvilli receptive ending morphology of the AFD neurons and thermotaxis. Modulates the temperature-evoked neuronal activity of the AFD neurons such as calcium responses to temperature gradients. Might also play a role in the chemotaxis behavior mediated by the sensory neurons AWA and AWC. The protein is Potassium/chloride cotransporter 3 (kcc-3) of Caenorhabditis elegans.